We begin with the raw amino-acid sequence, 678 residues long: THO complex subunit 5 homolog B (678 aa).

2 disordered regions span residues 1 to 37 (MSSDSLKKRKPKVNRSEDGKRGRHDEQEGRYYSEEAE) and 294 to 329 (ALFKPPEDSQDDESDSDAEEEQTTKRRRPTLGVQLD). Positions 7-10 (KKRK) match the Nuclear localization signal motif. Positions 14–37 (NRSEDGKRGRHDEQEGRYYSEEAE) are enriched in basic and acidic residues. A compositionally biased stretch (acidic residues) spans 301 to 314 (DSQDDESDSDAEEE).

Belongs to the THOC5 family. In terms of assembly, component of the THO subcomplex, which is composed of thoc1, thoc2, thoc3, thoc5, thoc6 and thoc7. Component of the transcription/export (TREX) complex at least composed of alyref/thoc4, ddx39b, sarnp/cip29, chtop and the THO subcomplex. Interacts with thoc7.

The protein localises to the nucleus. It localises to the nucleus speckle. The protein resides in the cytoplasm. Its function is as follows. Component of the THO subcomplex of the TREX complex which is thought to couple mRNA transcription, processing and nuclear export, and which specifically associates with spliced mRNA and not with unspliced pre-mRNA. Plays a key structural role in the oligomerization of the THO-ddx39b complex. TREX is recruited to spliced mRNAs by a transcription-independent mechanism, binds to mRNA upstream of the exon-junction complex (EJC) and is recruited in a splicing- and cap-dependent manner to a region near the 5' end of the mRNA where it functions in mRNA export to the cytoplasm via the TAP/NXF1 pathway. May be involved in cell differentiation. The protein is THO complex subunit 5 homolog B (thoc5-b) of Xenopus laevis (African clawed frog).